Reading from the N-terminus, the 206-residue chain is Small ribosomal subunit protein uS4 (206 aa).

In terms of domain architecture, S4 RNA-binding spans 96-156; sequence GRLDNVVYRM…EKSKKQARIK (61 aa).

This sequence belongs to the universal ribosomal protein uS4 family. In terms of assembly, part of the 30S ribosomal subunit. Contacts protein S5. The interaction surface between S4 and S5 is involved in control of translational fidelity.

Its function is as follows. One of the primary rRNA binding proteins, it binds directly to 16S rRNA where it nucleates assembly of the body of the 30S subunit. In terms of biological role, with S5 and S12 plays an important role in translational accuracy. In Histophilus somni (strain 129Pt) (Haemophilus somnus), this protein is Small ribosomal subunit protein uS4.